The primary structure comprises 240 residues: Phosphoribosylaminoimidazole-succinocarboxamide synthase (240 aa).

The protein belongs to the SAICAR synthetase family.

The enzyme catalyses 5-amino-1-(5-phospho-D-ribosyl)imidazole-4-carboxylate + L-aspartate + ATP = (2S)-2-[5-amino-1-(5-phospho-beta-D-ribosyl)imidazole-4-carboxamido]succinate + ADP + phosphate + 2 H(+). It functions in the pathway purine metabolism; IMP biosynthesis via de novo pathway; 5-amino-1-(5-phospho-D-ribosyl)imidazole-4-carboxamide from 5-amino-1-(5-phospho-D-ribosyl)imidazole-4-carboxylate: step 1/2. The protein is Phosphoribosylaminoimidazole-succinocarboxamide synthase of Pyrobaculum calidifontis (strain DSM 21063 / JCM 11548 / VA1).